The sequence spans 147 residues: uncharacterized protein (147 aa).

In terms of domain architecture, Rhodanese spans 50-140; it reads NQKKAIIVDT…WNSENLPTTF (91 aa).

This is an uncharacterized protein from Buchnera aphidicola subsp. Schizaphis graminum (strain Sg).